The primary structure comprises 398 residues: Cathepsin E (398 aa).

An N-terminal signal peptide occupies residues 1-21 (MKPLFVLLLLLLLLDLAQAQG). The propeptide at 22–58 (VLHRVPLRRHQSLRKKLRAQGQLSDFWRSHNLDMIEF) is activation peptide. A Peptidase A1 domain is found at 80 to 394 (YFGTVSIGSP…DRGNNQVGLA (315 aa)). The N-linked (GlcNAc...) asparagine glycan is linked to asparagine 92. Aspartate 98 is an active-site residue. 2 disulfides stabilise this stretch: cysteine 111–cysteine 116 and cysteine 274–cysteine 278. Aspartate 283 is a catalytic residue.

The protein belongs to the peptidase A1 family. Homodimer; disulfide-linked. Glycosylated. The nature of the carbohydrate chain varies between cell types. In brain microglia, the proenzyme contains a high mannose-type oligosaccharide, while the mature enzyme contains a complex-type oligosaccharide. In stomach and spleen, the mature enzyme contains a high mannose-type oligosaccharide. In erythrocyte membranes, the mature enzyme contains a complex-type oligosaccharide. As to expression, expressed abundantly in lymphocytes and macrophages of the thymus and spleen, and in the M cells of the intestine. In the brain, expression is limited to reactive microglial cells, the large pyrimidial neurons in the cerebral cortex, the CA1 and CA3 pyrimidial neurons of the hippocampus, the large neurons of the neostriatum, and the Purkinje neurons of the cerebellum.

It is found in the endosome. It catalyses the reaction Similar to cathepsin D, but slightly broader specificity.. In terms of biological role, may have a role in immune function. Probably involved in the processing of antigenic peptides during MHC class II-mediated antigen presentation. May play a role in activation-induced lymphocyte depletion in the thymus, and in neuronal degeneration and glial cell activation in the brain. The protein is Cathepsin E (Ctse) of Rattus norvegicus (Rat).